We begin with the raw amino-acid sequence, 475 residues long: V-type ATP synthase beta chain (475 aa).

It belongs to the ATPase alpha/beta chains family.

In terms of biological role, produces ATP from ADP in the presence of a proton gradient across the membrane. The V-type beta chain is a regulatory subunit. The protein is V-type ATP synthase beta chain of Anaeromyxobacter dehalogenans (strain 2CP-C).